The sequence spans 455 residues: Guanine/hypoxanthine permease GhxQ (455 aa).

Residues 1–31 lie on the Cytoplasmic side of the membrane; the sequence is MSGDILQTPDAPKPQGALDNYFKITARGSTV. The chain crosses the membrane as a helical span at residues 32–55; the sequence is RQEVLAGLTTFLAMVYSVIVVPGM. Over 56-65 the chain is Periplasmic; it reads LGKAGFPPAA. Residues 66–84 form a helical membrane-spanning segment; sequence VFVATCLVAGFGSLLMGLW. At 85–86 the chain is on the cytoplasmic side; it reads AN. Residues 87–103 form a discontinuously helical membrane-spanning segment; it reads LPMAIGCAISLTAFTAF. The Periplasmic portion of the chain corresponds to 104–115; sequence SLVLGQQISVPV. Residues 116-135 form a helical membrane-spanning segment; sequence ALGAVFLMGVIFTAISVTGV. The Cytoplasmic portion of the chain corresponds to 136-147; the sequence is RTWILRNLPMGI. The helical transmembrane segment at 148–168 threads the bilayer; that stretch reads AHGTGIGIGLFLLLIAANGVG. Residues 169–186 are Periplasmic-facing; the sequence is MVIKNPIEGLPVALGAFT. Residues 187–204 traverse the membrane as a helical segment; sequence SFPVMMSLLGLAVIFGLE. Topologically, residues 205 to 208 are cytoplasmic; that stretch reads KCRV. A helical transmembrane segment spans residues 209 to 228; the sequence is PGGILLVIIAISIIGLIFDP. Over 229–260 the chain is Periplasmic; sequence AVKYHGLVAMPSLTGEDGKSLIFSLDIMGALQ. Residues 261 to 289 form a helical membrane-spanning segment; sequence PTVLPSVLALVMTAVFDATGTIRAVAGQA. Residues 290 to 302 are Cytoplasmic-facing; that stretch reads NLLDKDNQIINGG. The helical transmembrane segment at 303 to 318 threads the bilayer; the sequence is KALTSDSVSSIFSGLV. At 319–320 the chain is on the periplasmic side; it reads GA. A discontinuously helical transmembrane segment spans residues 321 to 336; that stretch reads APAAVYIESAAGTAAG. Residues 337 to 340 lie on the Cytoplasmic side of the membrane; it reads GKTG. Residues 341-355 traverse the membrane as a helical segment; that stretch reads LTATVVGALFLLILF. The Periplasmic segment spans residues 356–366; it reads LSPLSFLIPGY. Residues 367-386 traverse the membrane as a helical segment; the sequence is ATAPALMYVGLLMLSNVSKL. At 387–391 the chain is on the cytoplasmic side; it reads DFNDF. An intramembrane region (discontinuously helical) is located at residues 392–427; the sequence is IDAMAGLVCAVFIVLTCNIVTGIMLGFVTLVVGRVF. Residues 428–455 are Cytoplasmic-facing; the sequence is AREWQKLNIGTVIITAALVAFYAGGWAI.

Belongs to the nucleobase:cation symporter-2 (NCS2) (TC 2.A.40) family. Azg-like subfamily.

It localises to the cell membrane. Functionally, high-affinity transporter for guanine and hypoxanthine. The sequence is that of Guanine/hypoxanthine permease GhxQ (ghxQ) from Escherichia coli (strain K12).